Consider the following 147-residue polypeptide: UPF0735 ACT domain-containing protein BPUM_2431 (147 aa).

One can recognise an ACT domain in the interval 70 to 145; it reads TLFFHLEDRS…FVEKVEILGS (76 aa).

Belongs to the UPF0735 family.

The polypeptide is UPF0735 ACT domain-containing protein BPUM_2431 (Bacillus pumilus (strain SAFR-032)).